We begin with the raw amino-acid sequence, 93 residues long: Putative septation protein SpoVG (93 aa).

It belongs to the SpoVG family.

Could be involved in septation. The chain is Putative septation protein SpoVG from Lachnoclostridium phytofermentans (strain ATCC 700394 / DSM 18823 / ISDg) (Clostridium phytofermentans).